The following is a 560-amino-acid chain: Nuclear receptor subfamily 5 group A member 2 (560 aa).

The segment at 21 to 55 is disordered; sequence IASAPGSETRHSPKREEQLREKRAGLPDRHRRPIP. Positions 28-48 are enriched in basic and acidic residues; that stretch reads ETRHSPKREEQLREKRAGLPD. Positions 104 to 175 form a DNA-binding region, nuclear receptor; it reads EELCPVCGDK…KCIDVGMKLE (72 aa). Zn(2+)-binding residues include Cys-107, Cys-110, Cys-124, Cys-127, Cys-143, Cys-149, Cys-159, and Cys-162. 2 consecutive NR C4-type zinc fingers follow at residues 107–127 and 143–167; these read CPVC…CESC and CIEN…FKKC. A C-terminal extension (CTE) region spans residues 173–188; that stretch reads KLEAVRADRMRGGRNK. Positions 189–208 match the FTZ-F1 box motif; sequence FGPMYKRDRALKQQKKALIR. Lys-289 is covalently cross-linked (Glycyl lysine isopeptide (Lys-Gly) (interchain with G-Cter in SUMO1)). Positions 319-558 constitute an NR LBD domain; it reads SIPHLILELL…NLLIEMLHAK (240 aa). A phospholipid derivative contacts are provided by Tyr-535 and Lys-539. The segment at 547–558 is AF-2; that stretch reads YNNLLIEMLHAK.

Belongs to the nuclear hormone receptor family. NR5 subfamily. Monomer; Binds DNA as a monomer. Interacts with nuclear receptor corepressors NR0B1 and NR0B2; repressing NR5A2 nuclear receptor activity. Interacts with nuclear receptor coactivators CTNNB1, PPARGC1A and NCOA2; interaction takes place following ligand-binding and promotes target gene activation. Interacts (when sumoylated) with GPS2; interaction with GPS2 onto hepatic acute phase protein promoters prevents N-Cor corepressor complex dissociation. Interacts with HNF1A. Interacts with GRIP1. Post-translationally, sumoylated by SUMO1 at Lys-289 during the hepatic acute phase response, leading to promote interaction with GPS2 and prevent N-Cor corepressor complex dissociation.

Its subcellular location is the nucleus. The protein resides in the chromosome. Functionally, orphan nuclear receptor that binds DNA as a monomer to the 5'-TCAAGGCCA-3' sequence and controls expression of target genes: regulates key biological processes, such as early embryonic development, cholesterol and bile acid synthesis pathways, as well as liver and pancreas morphogenesis. Ligand-binding causes conformational change which causes recruitment of coactivators, promoting target gene activation. The specific ligand is unknown, but specific phospholipids, such as phosphatidylethanolamine, phosphatidylserine, dilauroyl phosphatidylcholine and diundecanoyl phosphatidylcholine can act as ligand in vitro. Acts as a pioneer transcription factor, which unwraps target DNA from histones and elicits local opening of closed chromatin. Plays a central role during preimplantation stages of embryonic development. Plays a minor role in zygotic genome activation (ZGA) by regulating a small set of two-cell stage genes. Plays a major role in morula development (2-16 cells embryos) by acting as a master regulator at the 8-cell stage, controlling expression of lineage-specifying transcription factors and genes involved in mitosis, telomere maintenance and DNA repair. Zygotic NR5A2 binds to both closed and open chromatin with other transcription factors, often at SINE B1/Alu repeats DNA elements, promoting chromatin accessibility at nearby regulatory regions. Also involved in the epiblast stage of development and embryonic stem cell pluripotency, by promoting expression of POU5F1/OCT4. Regulates other processes later in development, such as formation of connective tissue in lower jaw and middle ear, neural stem cell differentiation, ovarian follicle development and Sertoli cell differentiation. Involved in exocrine pancreas development and acinar cell differentiation. Acts as an essential transcriptional regulator of lipid metabolism. Key regulator of cholesterol 7-alpha-hydroxylase gene (CYP7A) expression in liver. Activates the transcription of CYP2C38. Also acts as a negative regulator of inflammation in different organs, such as intestine, liver and pancreas. Protects against intestinal inflammation via its ability to regulate glucocorticoid production. Plays an anti-inflammatory role during the hepatic acute phase response by acting as a corepressor: inhibits the hepatic acute phase response by preventing dissociation of the N-Cor corepressor complex. Acts as a regulator of immunity by promoting lymphocyte T-cell development, proliferation and effector functions. Also involved in resolution of endoplasmic reticulum stress in the liver. The sequence is that of Nuclear receptor subfamily 5 group A member 2 from Mus musculus (Mouse).